The primary structure comprises 623 residues: MAKIIGIDLGTTNSCVSVMEGGEPVVIPNAEGSRTTPSVVSFQANGERLIGQVAKRQAITNPEKTIISIKRYMGTDHKVNIDNTEYTPQQISAMVLQKLKADAEAYLGEKVTQAVITVPAYFNDSQRQATKDAGKIAGLEVLRIINEPTAASLAYGLDKMDTNEKILVYDLGGGTFDVSILELGDGVFEVKATNGDTKLGGDDFDQKLIDYIAETFKAENGIDLRNDKMAIQRLKEAAEKAKIELSSATQTNINLPFITADATGPKHIDMNLTRAKFNELTHDLVQRTLEPIKKSLEGSGYAMSDIDKIIMVGGSTRIPAVQDAVKDFTGKELSKGVNPDEVVAMGAAIQAGVLTGEVKDVLLLDVTPLTLGIETFGGVSTTLIEKNTTIPTRKSQVFSTAADGQTSVEIHVVQGERSMAADNKTLGRFTLSGIAPAPRGIPQIEVTFDIDANGIVNVSAKDKGTGKEANITITASTNLTDDEIEKAVNEAKKFEAEDKKRKESIEVKNNADQIVYQTEKTLTDLGDKVSAEDKAQIEEKVKVVKDVKDGEDLEAIKKATEDLTQTFYGISSKIYQQANPEGAPGAGFDPNNMGGANAGNASAGNDKKDDNVVDADFKVEDDK.

At T175 the chain carries Phosphothreonine; by autocatalysis. Residues 578 to 623 (ANPEGAPGAGFDPNNMGGANAGNASAGNDKKDDNVVDADFKVEDDK) are disordered. The segment covering 591–604 (NNMGGANAGNASAG) has biased composition (low complexity). Over residues 605 to 623 (NDKKDDNVVDADFKVEDDK) the composition is skewed to basic and acidic residues.

The protein belongs to the heat shock protein 70 family.

Functionally, acts as a chaperone. This is Chaperone protein DnaK from Clostridium botulinum (strain 657 / Type Ba4).